An 879-amino-acid polypeptide reads, in one-letter code: Aminopeptidase M1 (879 aa).

A required for membrane association region spans residues His98–Val205. Residues Glu138 and Gly271–Asn275 each bind substrate. His307 lines the Zn(2+) pocket. Residue Glu308 is the Proton acceptor of the active site. Zn(2+) contacts are provided by His311 and Glu330. The Dileucine internalization motif signature appears at Leu728–Leu729.

Belongs to the peptidase M1 family. In terms of assembly, homodimer. Interacts with N-1-naphthylphthalamic acid (NPA). Requires Zn(2+) as cofactor. As to expression, ubiquitous with preferential expression in 5 days-old seedlings, roots, young flowers, upper inflorescence stems, and rosette leaves.

It is found in the membrane. The protein localises to the microsome membrane. It localises to the cytoplasm. The catalysed reaction is Release of an N-terminal amino acid, Xaa-|-Yaa- from a peptide, amide or arylamide. Xaa is preferably Ala, but may be most amino acids including Pro (slow action). When a terminal hydrophobic residue is followed by a prolyl residue, the two may be released as an intact Xaa-Pro dipeptide.. Metallopeptidase that binds to the auxin transport inhibitor N-1-naphthylphthalamic acid (NPA). Required for embryonic and seedling development as well as cell cycle progression. Homodimerization is required to proper localization and activity. May play a negative role in the regulation of PIN auxin transport proteins. This is Aminopeptidase M1 (APM1) from Arabidopsis thaliana (Mouse-ear cress).